The primary structure comprises 155 residues: Ribosomal RNA large subunit methyltransferase H (155 aa).

S-adenosyl-L-methionine contacts are provided by residues Leu72, Gly103, and 122-127; that span reads FGRMVW.

Belongs to the RNA methyltransferase RlmH family. Homodimer.

The protein resides in the cytoplasm. The catalysed reaction is pseudouridine(1915) in 23S rRNA + S-adenosyl-L-methionine = N(3)-methylpseudouridine(1915) in 23S rRNA + S-adenosyl-L-homocysteine + H(+). Its function is as follows. Specifically methylates the pseudouridine at position 1915 (m3Psi1915) in 23S rRNA. The polypeptide is Ribosomal RNA large subunit methyltransferase H (Paracoccus denitrificans (strain Pd 1222)).